A 1597-amino-acid chain; its full sequence is MEAEEAQRGASPPISAIEEFSIIPEAPMRSSQVSALGLEAQEDEDPSYKWREEHRLSATQQSELRDVCDYAIETMPSFPKEGSADVEPNQESLVAEACDTPEHWEAVPQSLAGRQARTLAPPELWACPIQSEHLDMAPFSSDLGSEEEEVEFWPGLTSLTLGSGQAEEEEETSSDNSGQTRYYSPCEEHPAETNQNEGSESGTIRQGEELPPEELQESQGLLHPQEVQVLEEQGQQEAGFRGEGTLREDVCADGLLGEEQMIEQVNDEKGEQKQKQEQVQDVMLGRQGERMGLTGEPEGLNDGEWEQEDMERKAQGQGGPEQGEERKRELQVPEENRADSQDEKSQTFLGKSEEVTGKQEDHGIKEKGVPVSGQEAKEPESWDGGRLGAVGRARSREEENEHHGPSMPALIAPEDSPHCDLFPGASYLMTQIPGTQTESRAEELSPAALSPSLEPIRCSHQPISLLGSFLTEESPDKEIDQNSQQEESRLRKGTVSSQGTEVVFASASVTPPRTPDSAPPSPAEAYPITPASVSARPPVAFPRRETSCAARAPETASAPLSMDDPSPCGTSEMCPAALYGFPSTGTSPPRPPANSTGTVQHLRSDSFPGSHRTEQTPDLVGMLLSYSHSELPQRPPKPAIYSSVTPRRDRRSGRDYSTVSASPTALSTLKQDSQESISNLERPSSPPSIQPWVSPHNPAFATESPAYGSSPSFVSMEDVRIHEPLPPPPPQRRDTHPSVVETDGHARVVVPTLKQHSHPPPLALGSGLHAPHKGPLPQASDPAVARQHRPLPSTPDSSHHAQATPRWRYNKPLPPTPDLPQPHLPPISAPGSSRIYRPLPPLPIIDPPTEPPPLPPKSRGRSRSTRGGHMNSGGHAKTRPACQDWTVPLPASAGRTSWPPATARSTESFTSTSRSKSEVSPGMAFSNMTNFLCPSSPTTPWTPELQGPTSKDEAGVSEHPEAPAREPLRRTTPQQGASGPGRSPVGQARQPEKPSHLHLEKASSWPHRRDSGRPPGDSSGQAVAPSEGANKHKGWSRQGLRRPSILPEGSSDSRGPAVEKHPGPSDTVVFREKKPKEVMGGFSRRCSKLINSSQLLYQEYSDVVLNKEIQSQQRLESLSETPGPSSPRQPRKALVSSESYLQRLSMASSGSLWQEIPVVRNSTVLLSMTHEDQKLQEVKFELIVSEASYLRSLNIAVDHFQLSTSLRATLSNQEHQWLFSRLQDVRDVSATFLSDLEENFENNIFSFQVCDVVLNHAPDFRRVYLPYVTNQTYQERTFQSLMNSNSNFREVLEKLESDPVCQRLSLKSFLILPFQRITRLKLLLQNILKRTQPGSSEEAEATKAHHALEQLIRDCNNNVQSMRRTEELIYLSQKIEFECKIFPLISQSRWLVKSGELTALEFSASPGLRRKLNTRPVHLHLFNDCLLLSRPREGSRFLVFDHAPFSSIRGEKCEMKLHGPHKNLFRLFLRQNTQGAQAEFLFRTETQSEKLRWISALAMPREELDLLECYNSPQVQCLRAYKPRENDELALEKADVVMVTQQSSDGWLEGVRLSDGERGWFPVQQVEFISNPEVRAQNLKEAHRVKTAKLQLVEQQA.

Disordered regions lie at residues 138–246, 258–455, and 467–1072; these read PFSS…EGTL, EEQM…SLEP, and GSFL…VFRE. Serine 184 is subject to Phosphoserine. Positions 192-204 are enriched in polar residues; that stretch reads ETNQNEGSESGTI. Residues 217 to 237 are compositionally biased toward low complexity; it reads ESQGLLHPQEVQVLEEQGQQE. The span at 266 to 278 shows a compositional bias: basic and acidic residues; it reads NDEKGEQKQKQEQ. Acidic residues predominate over residues 299–309; sequence GLNDGEWEQED. Composition is skewed to basic and acidic residues over residues 323–368 and 394–404; these read GEER…KEKG and RSREEENEHHG. A compositionally biased stretch (polar residues) spans 428 to 438; it reads LMTQIPGTQTE. 2 positions are modified to phosphoserine: serine 445 and serine 450. The span at 474 to 490 shows a compositional bias: basic and acidic residues; it reads SPDKEIDQNSQQEESRL. Positions 512–522 are enriched in pro residues; it reads PRTPDSAPPSP. Composition is skewed to polar residues over residues 583-601 and 655-682; these read STGTSPPRPPANSTGTVQH and DYSTVSASPTALSTLKQDSQESISNLER. Residues 731–746 show a composition bias toward basic and acidic residues; it reads QRRDTHPSVVETDGHA. 2 stretches are compositionally biased toward pro residues: residues 812 to 828 and 838 to 856; these read PLPPTPDLPQPHLPPIS and PLPPLPIIDPPTEPPPLPP. Arginine 866 is subject to Asymmetric dimethylarginine. Low complexity predominate over residues 901–920; that stretch reads ATARSTESFTSTSRSKSEVS. Over residues 926–941 the composition is skewed to polar residues; the sequence is SNMTNFLCPSSPTTPW. The span at 950–969 shows a compositional bias: basic and acidic residues; it reads SKDEAGVSEHPEAPAREPLR. Phosphoserine is present on residues serine 983, serine 1011, and serine 1044. The segment covering 990 to 1012 has biased composition (basic and acidic residues); that stretch reads QPEKPSHLHLEKASSWPHRRDSG. The span at 1057–1072 shows a compositional bias: basic and acidic residues; sequence AVEKHPGPSDTVVFRE. Serine 1126 is modified (phosphoserine). A DH domain is found at 1174–1358; sequence KLQEVKFELI…EQLIRDCNNN (185 aa). A PH domain is found at 1390–1502; sequence WLVKSGELTA…WISALAMPRE (113 aa). The SH3 domain occupies 1510–1571; the sequence is YNSPQVQCLR…PVQQVEFISN (62 aa).

As to quaternary structure, interacts with SRC. Forms a ternary complex with SRC and the PI3K 85 kDa subunit. Interacts with and is activated by the heterodimer formed by GNB1 and GNG2. Interacts with ODAM (via C-terminus). Interacts with RHOA. Post-translationally, activation of SRC induces tyrosine phosphorylation of ARHGEF5. In terms of tissue distribution, ubiquitously expressed with highest levels in placenta. High levels are also found in colon, kidney, trachea, prostate, liver, pancreas, pituitary gland, thyroid gland and mammary gland. In fetal tissues, expressed at high levels in kidney, lung and liver. Expressed at low levels in lung and heart.

The protein resides in the cytoplasm. The protein localises to the nucleus. Its subcellular location is the cell projection. It is found in the podosome. Its function is as follows. Guanine nucleotide exchange factor which activates Rho GTPases. Strongly activates RHOA. Also strongly activates RHOB, weakly activates RHOC and RHOG and shows no effect on RHOD, RHOV, RHOQ or RAC1. Involved in regulation of cell shape and actin cytoskeletal organization. Plays a role in actin organization by generating a loss of actin stress fibers and the formation of membrane ruffles and filopodia. Required for SRC-induced podosome formation. Involved in positive regulation of immature dendritic cell migration. This chain is Rho guanine nucleotide exchange factor 5 (ARHGEF5), found in Homo sapiens (Human).